The primary structure comprises 1852 residues: Dihydropyridine-sensitive L-type skeletal muscle calcium channel subunit alpha-1 (1852 aa).

Residues 1–70 (MESGSGGGGG…KTCINIVEWK (70 aa)) are Cytoplasmic-facing. The I repeat unit spans residues 57 to 354 (NPFRKTCINI…LVLGALSGEF (298 aa)). The chain crosses the membrane as a helical span at residues 71-86 (PFEIIILLTIFANCVA). The Extracellular portion of the chain corresponds to 87–107 (LAVFLPMPEEDTNNTNLTLES). 2 N-linked (GlcNAc...) asparagine glycosylation sites follow: N99 and N102. Residues 108-127 (LEYIFLVIFTLECFLKIVAY) form a helical membrane-spanning segment. The Cytoplasmic segment spans residues 128-139 (GLLFHEGAYLRN). The chain crosses the membrane as a helical span at residues 140–155 (CWNILDFVIVFMGLFT). Over 156–176 (LVVDTINTIAGVPTEKGGGFD) the chain is Extracellular. Residues 177-195 (MKALRAFRVLRPLRLVSGV) form a helical membrane-spanning segment. Over 196–214 (PSLQVVMSSILKSMLPLFH) the chain is Cytoplasmic. The helical transmembrane segment at 215 to 234 (IALLVFFMVHIYAIMGLELF) threads the bilayer. The Extracellular segment spans residues 235–326 (KCKMHKTCYY…WINDAMGNDW (92 aa)). A glycan (N-linked (GlcNAc...) asparagine) is linked at N274. The helical transmembrane segment at 327–351 (PWIYFLTLILVGSFFILNLVLGALS) threads the bilayer. The Cytoplasmic portion of the chain corresponds to 352–447 (GEFTKEREES…RKCHVWVKSK (96 aa)). The tract at residues 374-391 (QQMDEDLEGYMEWITHAE) is binding to the beta subunit. Residues 433–679 (NVVLRRKCHV…VFLAIAVDNL (247 aa)) form an II repeat. The chain crosses the membrane as a helical span at residues 448–466 (FFNWWVLLVVLLNTLVIAM). At 467–481 (EHHNQTEGLTSFQDT) the chain is on the extracellular side. A glycan (N-linked (GlcNAc...) asparagine) is linked at N470. Residues 482-501 (ANVILLACFTIEMVMKMYAF) form a helical membrane-spanning segment. Over 502 to 509 (GPRAYFMS) the chain is Cytoplasmic. The helical transmembrane segment at 510–528 (IFNRFDCFVVTIGILEIIL) threads the bilayer. At 529-538 (VVSNIMTPLG) the chain is on the extracellular side. A helical membrane pass occupies residues 539-557 (ISVMRCIRLLRLFKLTRYW). The Cytoplasmic portion of the chain corresponds to 558–576 (TSLNNLVASLLNSVKSIAS). Residues 577–596 (LLLLLFLFIVIFALLGMQVF) traverse the membrane as a helical segment. Topologically, residues 597 to 651 (GGKFNFPDRVIQRSNFDNFPQALISVFQVLTGEEWDSIMYNGIMAHGGPQSPGIL) are extracellular. The helical transmembrane segment at 652-675 (VSIYFIILYVCGNFVLLNVFLAIA) threads the bilayer. Topologically, residues 676–815 (VDNLAEAESL…KLCHRIVNHT (140 aa)) are cytoplasmic. The III repeat unit spans residues 802 to 1084 (HKFRKLCHRI…IFVGFVIVTF (283 aa)). A helical transmembrane segment spans residues 816 to 834 (TFTNIILLFILLSSISLAA). Residues 835–850 (EDPIDPRSFRNKVLAY) are Extracellular-facing. The helical transmembrane segment at 851–870 (ADIVFTTVFTIEIVLKMTVY) threads the bilayer. Over 871-882 (GAFLHTGSFCRN) the chain is Cytoplasmic. Residues 883–901 (SFNILDLIVVGVSLLSMGM) form a helical membrane-spanning segment. The Extracellular segment spans residues 902–908 (ESSTISV). Residues 909–927 (VKILRVLRVLRPLRAINRA) form a helical membrane-spanning segment. At 928–946 (KGLKHVVQCMFVAIKTIGN) the chain is on the cytoplasmic side. The chain crosses the membrane as a helical span at residues 947-966 (IVLVTMLLDFMFACIGVQLF). The Extracellular segment spans residues 967 to 1056 (KGKLYYCTDP…TGPLYNNRVG (90 aa)). The interval 1004–1093 (RMWVNSDFNF…FQKQGEQEYK (90 aa)) is dihydropyridine binding. Residues 1057–1081 (ISIFFIIYIIIIAFFMMNIFVGFVI) form a helical membrane-spanning segment. Over 1082-1134 (VTFQKQGEQEYKDCELDKNQRQCVQYALKARPLKCYIPKNPHQYRVWYFVTSC) the chain is Cytoplasmic. The stretch at 1121–1405 (NPHQYRVWYF…LFVAIIMDNV (285 aa)) is one IV repeat. A helical membrane pass occupies residues 1135–1153 (YFEYLMFFLIMLNTLCLGI). The Extracellular portion of the chain corresponds to 1154–1168 (QHCNQSDHITKLSDT). N-linked (GlcNAc...) asparagine glycosylation is present at N1157. Residues 1169 to 1188 (LNLIFTVLFTGEMIVKLIAF) form a helical membrane-spanning segment. At 1189–1196 (KAKGYFGD) the chain is on the cytoplasmic side. A helical membrane pass occupies residues 1197 to 1215 (PWNVFDFIIVVGSIVDVVL). Over 1216–1252 (SEVDAALEARGGLWCLHGCAEVNPMQAIAEAENVRVS) the chain is Extracellular. A helical transmembrane segment spans residues 1253-1271 (ITFFRLFRVLRLIKLLNRS). Residues 1272–1290 (EGIRNLLWTFIKSFQALPH) lie on the Cytoplasmic side of the membrane. Residues 1291 to 1310 (VGLLIVMLFFIYAVIGMQMF) form a helical membrane-spanning segment. The Extracellular portion of the chain corresponds to 1311–1377 (GKVALVDGTE…GEEYTCGSSI (67 aa)). The segment at 1358 to 1424 (LCDAKSDYGP…LGPHHLDEFK (67 aa)) is dihydropyridine binding. Residues 1370-1413 (EYTCGSSIAVFYFLSFYILCAFLIINLFVAIIMDNVDYLTRDWS) form a phenylalkylamine binding region. The chain crosses the membrane as a helical span at residues 1378–1402 (AVFYFLSFYILCAFLIINLFVAIIM). Residues 1403 to 1852 (DNVDYLTRDW…TKPKENTSAV (450 aa)) lie on the Cytoplasmic side of the membrane. The EF-hand domain occupies 1418–1453 (HHLDEFKKIWAEYDPEATGRIKHLDVVTLLRRIQPP). Positions 1431, 1433, 1435, 1437, and 1442 each coordinate Ca(2+). The interval 1820–1852 (NRQSGKVTKRKRRPIPVPPGTKSTKPKENTSAV) is disordered.

This sequence belongs to the calcium channel alpha-1 subunit (TC 1.A.1.11) family. Multisubunit complex consisting of alpha-1, alpha-2, beta and delta subunits in a 1:1:1:1 ratio. The channel activity is directed by the pore-forming and voltage-sensitive alpha-1 subunit. In many cases, this subunit is sufficient to generate voltage-sensitive calcium channel activity. The auxiliary subunits beta and alpha-2/delta linked by a disulfide bridge regulate the channel activity. An additional gamma subunit is present only in skeletal muscle L-type channel. Post-translationally, may be non-phosphorylated. As to expression, skeletal muscle.

It localises to the membrane. Functionally, voltage-sensitive calcium channels (VSCC) mediate the entry of calcium ions into excitable cells and are also involved in a variety of calcium-dependent processes, including muscle contraction, gene expression, cell motility, cell division and cell death. The isoform alpha-1S gives rise to L-type calcium currents. Long-lasting (L-type) calcium channels belong to the 'high-voltage activated' (HVA) group. They are blocked by dihydropyridines (DHP), phenylalkylamines, and by benzothiazepines. Calcium channels containing the alpha-1S subunit play an important role in excitation-contraction coupling in skeletal muscle. The protein is Dihydropyridine-sensitive L-type skeletal muscle calcium channel subunit alpha-1 of Cyprinus carpio (Common carp).